We begin with the raw amino-acid sequence, 99 residues long: NADH-quinone oxidoreductase subunit K 1 (99 aa).

3 helical membrane passes run 3–23 (PVNY…GVLV), 28–48 (IVVF…LVTF), and 59–79 (IVAF…LAII).

Belongs to the complex I subunit 4L family. NDH-1 is composed of 14 different subunits. Subunits NuoA, H, J, K, L, M, N constitute the membrane sector of the complex.

Its subcellular location is the cell membrane. It catalyses the reaction a quinone + NADH + 5 H(+)(in) = a quinol + NAD(+) + 4 H(+)(out). Its function is as follows. NDH-1 shuttles electrons from NADH, via FMN and iron-sulfur (Fe-S) centers, to quinones in the respiratory chain. The immediate electron acceptor for the enzyme in this species is believed to be a menaquinone. Couples the redox reaction to proton translocation (for every two electrons transferred, four hydrogen ions are translocated across the cytoplasmic membrane), and thus conserves the redox energy in a proton gradient. The chain is NADH-quinone oxidoreductase subunit K 1 from Streptomyces griseus subsp. griseus (strain JCM 4626 / CBS 651.72 / NBRC 13350 / KCC S-0626 / ISP 5235).